The chain runs to 330 residues: Aspartate--ammonia ligase (330 aa).

It belongs to the class-II aminoacyl-tRNA synthetase family. AsnA subfamily.

The protein localises to the cytoplasm. The catalysed reaction is L-aspartate + NH4(+) + ATP = L-asparagine + AMP + diphosphate + H(+). It participates in amino-acid biosynthesis; L-asparagine biosynthesis; L-asparagine from L-aspartate (ammonia route): step 1/1. This chain is Aspartate--ammonia ligase, found in Escherichia coli O17:K52:H18 (strain UMN026 / ExPEC).